Here is a 571-residue protein sequence, read N- to C-terminus: Proline--tRNA ligase (571 aa).

Belongs to the class-II aminoacyl-tRNA synthetase family. ProS type 1 subfamily. In terms of assembly, homodimer.

Its subcellular location is the cytoplasm. It catalyses the reaction tRNA(Pro) + L-proline + ATP = L-prolyl-tRNA(Pro) + AMP + diphosphate. Functionally, catalyzes the attachment of proline to tRNA(Pro) in a two-step reaction: proline is first activated by ATP to form Pro-AMP and then transferred to the acceptor end of tRNA(Pro). As ProRS can inadvertently accommodate and process non-cognate amino acids such as alanine and cysteine, to avoid such errors it has two additional distinct editing activities against alanine. One activity is designated as 'pretransfer' editing and involves the tRNA(Pro)-independent hydrolysis of activated Ala-AMP. The other activity is designated 'posttransfer' editing and involves deacylation of mischarged Ala-tRNA(Pro). The misacylated Cys-tRNA(Pro) is not edited by ProRS. This Aliivibrio fischeri (strain MJ11) (Vibrio fischeri) protein is Proline--tRNA ligase.